Reading from the N-terminus, the 367-residue chain is Cyclic AMP-responsive element-binding protein 3-like protein 4 (367 aa).

Residues 1 to 52 (MELGCPELLEPPEDIFSTGSFLELGFNGPPSKVPGLQKSESDDFLNLFIDPN) are required for transcriptional activation. At 1–267 (MELGCPELLE…QTSSRAAQTS (267 aa)) the chain is on the cytoplasmic side. Positions 58–81 (ETSPGSDSGVSEDPGSPAPQAPSS) are disordered. Positions 189-252 (ILKKIRRKIR…ISLVAQVHQL (64 aa)) constitute a bZIP domain. Residues 191–230 (KKIRRKIRNKQSAQDSRRRKKEYIDGLESRVAACSEQNQK) are basic motif. Residues 231–252 (LQRKVQELERQNISLVAQVHQL) form a leucine-zipper region. A helical; Signal-anchor for type II membrane protein membrane pass occupies residues 268 to 288 (TCVLILLFSLALIILPSFSPF). Over 289-367 (QSQPEARSEG…IRGMVHADEM (79 aa)) the chain is Lumenal. Residue Asn-338 is glycosylated (N-linked (GlcNAc...) asparagine).

The protein belongs to the bZIP family. ATF subfamily. Binds DNA as a dimer. Forms a heterodimer with CREM isoform Delta. Controlled by regulated intramembrane proteolysis (RIP). Following ER stress a fragment containing the cytoplasmic transcription factor domain is released by proteolysis. The cleavage seems to be performed sequentially by site-1 and site-2 proteases (PS1 and PS2). PS1 cleavage may be suppressed by a determinant in the C-terminal region.

The protein localises to the endoplasmic reticulum membrane. It localises to the nucleus. Functionally, transcriptional activator that may play a role in the unfolded protein response. Binds to the UPR element (UPRE) but not to CRE element. Preferentially binds DNA with to the consensus sequence 5'-T[GT]ACGT[GA][GT]-3' and has transcriptional activation activity from UPRE. Binds to NF-kappa-B site and has transcriptional activation activity from NF-kappa-B-containing regulatory elements. Increases the binding of CREM isoform Delta with CRE. The CREM isoform Delta-CREB3L4 heterodimer functions through CRE but not through UPRE and may recruit HIRA to CRE to regulate histone exchange. This is Cyclic AMP-responsive element-binding protein 3-like protein 4 (Creb3l4) from Rattus norvegicus (Rat).